Here is a 298-residue protein sequence, read N- to C-terminus: Specificity protein transcription factor 1 (298 aa).

The span at 206–218 shows a compositional bias: low complexity; that stretch reads VSSGSESVSARGT. The interval 206–233 is disordered; sequence VSSGSESVSARGTSGSGGTGKYPSSRTA. The segment at 260–284 adopts a C2H2-type zinc-finger fold; it reads HNCHIAGCGKVYNKSSHLKAHLRWH.

It belongs to the Sp1 C2H2-type zinc-finger protein family. Expressed in ASJ sensory neurons, pharyngeal cells, rectal cells, intestine, seam cells, and vulval cells.

Probable transcription factor which modulates gene expression, thereby acting as an ASJ sensory neuron terminal selector gene. This Caenorhabditis elegans protein is Specificity protein transcription factor 1.